The primary structure comprises 503 residues: Probable cytosol aminopeptidase (503 aa).

Mn(2+) contacts are provided by Lys274 and Asp279. The active site involves Lys286. Residues Asp297, Asp356, and Glu358 each contribute to the Mn(2+) site. Arg360 is an active-site residue.

Belongs to the peptidase M17 family. It depends on Mn(2+) as a cofactor.

The protein resides in the cytoplasm. The enzyme catalyses Release of an N-terminal amino acid, Xaa-|-Yaa-, in which Xaa is preferably Leu, but may be other amino acids including Pro although not Arg or Lys, and Yaa may be Pro. Amino acid amides and methyl esters are also readily hydrolyzed, but rates on arylamides are exceedingly low.. The catalysed reaction is Release of an N-terminal amino acid, preferentially leucine, but not glutamic or aspartic acids.. In terms of biological role, presumably involved in the processing and regular turnover of intracellular proteins. Catalyzes the removal of unsubstituted N-terminal amino acids from various peptides. In Burkholderia orbicola (strain AU 1054), this protein is Probable cytosol aminopeptidase.